A 366-amino-acid chain; its full sequence is D-alanine--D-alanine ligase (366 aa).

One can recognise an ATP-grasp domain in the interval 140–346; that stretch reads KALFAQSDLP…YGELLSRLVD (207 aa). ATP is bound at residue 173–228; it reads EDRLGYPCFVKPANMGSSVGISKATNRAELVAAFDDAVRYDRKLIVEKGINVREIE. The Mg(2+) site is built by Asp-299, Glu-313, and Asn-315.

This sequence belongs to the D-alanine--D-alanine ligase family. The cofactor is Mg(2+). Requires Mn(2+) as cofactor.

It localises to the cytoplasm. The enzyme catalyses 2 D-alanine + ATP = D-alanyl-D-alanine + ADP + phosphate + H(+). The protein operates within cell wall biogenesis; peptidoglycan biosynthesis. Functionally, cell wall formation. The sequence is that of D-alanine--D-alanine ligase from Heliobacterium modesticaldum (strain ATCC 51547 / Ice1).